A 147-amino-acid polypeptide reads, in one-letter code: S-protein homolog 10 (147 aa).

The signal sequence occupies residues 1-20; it reads MNCFSYFFLVIILCAGLNNA.

The protein belongs to the plant self-incompatibility (S1) protein family.

The protein resides in the secreted. The polypeptide is S-protein homolog 10 (Arabidopsis thaliana (Mouse-ear cress)).